A 228-amino-acid polypeptide reads, in one-letter code: Cytidylate kinase (228 aa).

An ATP-binding site is contributed by Gly-17–Thr-25.

Belongs to the cytidylate kinase family. Type 1 subfamily.

It localises to the cytoplasm. The enzyme catalyses CMP + ATP = CDP + ADP. It carries out the reaction dCMP + ATP = dCDP + ADP. This is Cytidylate kinase from Paraburkholderia phymatum (strain DSM 17167 / CIP 108236 / LMG 21445 / STM815) (Burkholderia phymatum).